A 416-amino-acid polypeptide reads, in one-letter code: Nucleoside transporter 1 (416 aa).

Residues 1–26 are compositionally biased toward basic and acidic residues; that stretch reads MSISKESSKTMIDIEKKGGEGKDGKG. A disordered region spans residues 1–28; sequence MSISKESSKTMIDIEKKGGEGKDGKGGS. Over 1-35 the chain is Cytoplasmic; the sequence is MSISKESSKTMIDIEKKGGEGKDGKGGSKMTKNEQ. The helical transmembrane segment at 36 to 58 threads the bilayer; sequence FLLPFTFILIGLSSLNVWNTALG. Over 59–64 the chain is Extracellular; it reads LNINFK. A helical membrane pass occupies residues 65-83; that stretch reads YNTFQITGLVCSSIIALFV. Topologically, residues 84 to 87 are cytoplasmic; sequence KVPK. Residues 88-107 form a helical membrane-spanning segment; that stretch reads MLLPFALGGLAMLCAGFQIA. The Extracellular segment spans residues 108-119; that stretch reads HQCFTFEQFDTY. The chain crosses the membrane as a helical span at residues 120-139; it reads CLIAFIVIGIMAGLAQTIAF. Over 140–148 the chain is Cytoplasmic; sequence SVGTTMEEN. A helical membrane pass occupies residues 149-171; that stretch reads MGGYMSAGIGISGVFIFIINLLL. Residues 172-187 are Extracellular-facing; it reads DQIVPDQKKFNVNEAK. Residues 188–210 traverse the membrane as a helical segment; the sequence is LLYLFLICELCLVLAIIFSVCNL. The Cytoplasmic segment spans residues 211 to 241; that stretch reads ELSSSKTSKEEEYSDKEQGLSYLELLKDSYK. Residues 242 to 261 traverse the membrane as a helical segment; that stretch reads AILAMFLVNWLSLQLFPGVG. The Extracellular segment spans residues 262-273; it reads HKKWQESHNISD. Residues 274-292 form a helical membrane-spanning segment; sequence YNVTLIVGMFQVFDFVSRY. Residues 293 to 311 are Cytoplasmic-facing; it reads PPNLSHMKIFKWFTFSLNK. The chain crosses the membrane as a helical span at residues 312–331; it reads LLLLNFLRLLFIPWFVINAA. The Extracellular portion of the chain corresponds to 332–343; sequence CDLPIFTNIVQQ. The helical transmembrane segment at 344–366 threads the bilayer; that stretch reads CVCMAMLAFTNGWFNTVPFLVFV. Residues 367–380 are Cytoplasmic-facing; it reads QELKKAKKKKDIET. A helical membrane pass occupies residues 381 to 403; sequence ISTFLVVAMFVGLFMGIWTTYIY. Topologically, residues 404–416 are extracellular; that stretch reads DFFPIVIKRYVVP.

It belongs to the SLC29A/ENT transporter (TC 2.A.57) family.

It is found in the cell membrane. The catalysed reaction is inosine(in) = inosine(out). It carries out the reaction adenosine(in) = adenosine(out). The enzyme catalyses hypoxanthine(out) = hypoxanthine(in). It catalyses the reaction guanosine(in) = guanosine(out). The catalysed reaction is guanine(out) = guanine(in). It carries out the reaction thymidine(in) = thymidine(out). The enzyme catalyses uridine(out) = uridine(in). It catalyses the reaction uracil(in) = uracil(out). The catalysed reaction is thymine(out) = thymine(in). It carries out the reaction adenine(out) = adenine(in). The enzyme catalyses cytosine(out) = cytosine(in). It catalyses the reaction xanthine(out) = xanthine(in). Its function is as follows. Nucleoside and nucleobase transporter with a broad substrate specificity. The sequence is that of Nucleoside transporter 1 from Plasmodium vivax (strain Salvador I).